A 522-amino-acid polypeptide reads, in one-letter code: TNF receptor-associated factor 6 (522 aa).

The segment at 1–354 (MSLLNCENSC…EAQQCNGIYI (354 aa)) is interaction with TAX1BP1. The RING-type zinc-finger motif lies at 70 to 109 (CPICLMALREAVQTPCGHRFCKACIIKSIRDAGHKCPVDN). A Glycyl lysine isopeptide (Lys-Gly) (interchain with G-Cter in SUMO); alternate cross-link involves residue lysine 124. Lysine 124 participates in a covalent cross-link: Glycyl lysine isopeptide (Lys-Gly) (interchain with G-Cter in ubiquitin); alternate. Lysine 142 participates in a covalent cross-link: Glycyl lysine isopeptide (Lys-Gly) (interchain with G-Cter in SUMO). 2 TRAF-type zinc fingers span residues 150-202 (DHQA…EDKE) and 203-259 (IHDQ…NHLA). A coiled-coil region spans residues 288–348 (YISEVRNFQE…DKVAEIEAQQ (61 aa)). Residue lysine 319 forms a Glycyl lysine isopeptide (Lys-Gly) (interchain with G-Cter in ubiquitin) linkage. An MATH domain is found at 350 to 499 (NGIYIWKIGN…DDTLLVRCEV (150 aa)). Positions 355–522 (WKIGNFGMHL…FQPRSTDAGV (168 aa)) are interaction with TANK. Lysine 453 is covalently cross-linked (Glycyl lysine isopeptide (Lys-Gly) (interchain with G-Cter in SUMO)).

It belongs to the TNF receptor-associated factor family. A subfamily. Homotrimer. Homooligomer. N-terminal region is dimeric while C-terminal region is trimeric; maybe providing a mode of oligomerization. Upon IL1B treatment, forms a complex with PELI1, IRAK1, IRAK4 and MYD88; this complex recruits MAP3K7/TAK1, TAB1 and TAB2 to mediate NF-kappa-B activation. Direct binding of SMAD6 to PELI1 prevents the complex formation and hence negatively regulates IL1R-TLR signaling and eventually NF-kappa-B-mediated gene expression. Binds to TNFRSF5/CD40 and TNFRSF11A/RANK. Associates with NGFR, TNFRSF17, IRAK2, IRAK3, RIPK2, MAP3K1, MAP3K5, MAP3K14, CSK, TRAF, TRAF-interacting protein TRIP and TNF receptor associated protein TDP2. Interacts with IL17R. Interacts with SQSTM1 bridging NTRK1 and NGFR. Forms a ternary complex with SQSTM1 and PRKCZ. Interacts with PELI2 and PELI3. Binds UBE2V1. Interacts with TAX1BP1; this interaction mediates deubiquitination of TRAF6 and inhibition of NF-kappa-B activation. Interacts with ZNF675. Interacts with ARRB1 and ARRB2. Interacts with MAP3K7 and TAB1/MAP3K7IP1; during IL-1 signaling. Interacts with UBE2N. Interacts with TGFBR1, HDAC1 and RANGAP1. Interacts with AKT1, AKT2 and AKT3. Interacts (via TRAF domains) with NUMBL (via C-terminal). Interacts with RBCK1. Interacts with LIMD1 (via LIM domains). Interacts with RSAD2/viperin. Interacts (via C-terminus) with EIF2AK2/PKR (via the kinase catalytic domain). Interacts with ZFAND5. Interacts with IL1RL1. Interacts with TRAFD1. Interacts with AJUBA. Interacts with MAVS/IPS1. Interacts (via TRAF domains) with DYNC2I2 (via WD domains). Interacts with IFIT3 (via N-terminus). Interacts with TICAM2. Interacts with CARD14. Interacts with CD40 and MAP3K8; the interaction is required for ERK activation. Interacts with TICAM1 and this interaction is enhanced in the presence of WDFY1. Interacts with TANK; this interaction increases in response to DNA damage. Interacts with USP10; this interaction increases in response to DNA damage. Interacts with ZC3H12A; this interaction increases in response to DNA damage and is stimulated by TANK. Interacts with WDFY3. Interacts with TRIM13. Interacts with GPS2. Interacts (via C-terminus) with SASH1. Interacts with LRRC19. Interacts with IL17RA and TRAF3IP2. Interacts with TOMM70. Interacts with AMBRA1; interaction is required to mediate 'Lys-63'-linked ubiquitination of ULK1. Interacts with CRBN; this interaction inhibits TLR4-mediated signaling by preventing TRAF6-mediated ubiquitination of ECSIT. Post-translationally, sumoylated on Lys-124, Lys-142 and Lys-453 with SUMO1. Polyubiquitinated on Lys-124 by TRAF3IP2; after cell stimulation with IL17A. Polyubiquitinated on Lys-124; after cell stimulation with IL1B or TGFB. This ligand-induced cell stimulation leads to dimerization/oligomerization of TRAF6 molecules, followed by auto-ubiquitination which involves UBE2N and UBE2V1 and leads to TRAF6 activation. This 'Lys-63' site-specific poly-ubiquitination appears to be associated with the activation of signaling molecules. Endogenous autoubiquitination occurs only for the cytoplasmic form. Deubiquitinated by USP10 in a TANK-dependent manner, leading to the negative regulation of NF-kappaB signaling upon DNA damage. LRRC19 induces 'Lys-63' ubiquitination. Ubiquitinated at Lys-319 by the SCF(FBXL2) complex, leading to its degradation by the proteasome. In terms of processing, (Microbial infection) Deubiquitinated by Epstein-Barr virus BPLF1 on both 'Lys-48' and 'Lys-63'-linked ubiquitin chains; leading to NF-kappa-B signaling inhibition. As to expression, expressed in heart, brain, placenta, lung, liver, skeletal muscle, kidney and pancreas.

It localises to the cytoplasm. The protein localises to the cell cortex. Its subcellular location is the nucleus. It is found in the lipid droplet. It carries out the reaction S-ubiquitinyl-[E2 ubiquitin-conjugating enzyme]-L-cysteine + [acceptor protein]-L-lysine = [E2 ubiquitin-conjugating enzyme]-L-cysteine + N(6)-ubiquitinyl-[acceptor protein]-L-lysine.. The protein operates within protein modification; protein ubiquitination. Functionally, E3 ubiquitin ligase that, together with UBE2N and UBE2V1, mediates the synthesis of 'Lys-63'-linked-polyubiquitin chains conjugated to proteins, such as ECSIT, IKBKG, IRAK1, AKT1 and AKT2. Also mediates ubiquitination of free/unanchored polyubiquitin chain that leads to MAP3K7 activation. Leads to the activation of NF-kappa-B and JUN. Seems to also play a role in dendritic cells (DCs) maturation and/or activation. Represses c-Myb-mediated transactivation, in B-lymphocytes. Adapter protein that seems to play a role in signal transduction initiated via TNF receptor, IL-1 receptor and IL-17 receptor. Regulates osteoclast differentiation by mediating the activation of adapter protein complex 1 (AP-1) and NF-kappa-B, in response to RANK-L stimulation. Together with MAP3K8, mediates CD40 signals that activate ERK in B-cells and macrophages, and thus may play a role in the regulation of immunoglobulin production. Acts as a regulator of the JNK and NF-kappa-B signaling pathways by initiating assembly of heterotypic 'Lys-63'-/'Lys-48'-linked branched ubiquitin chains that are then recognized by TAB2: TRAF6 catalyzes initial 'Lys-63'-linked-polyubiquitin chains that are then branched via 'Lys-48'-linked polyubiquitin by HUWE1. 'Lys-63'-/'Lys-48'-linked branched ubiquitin chains protect 'Lys-63'-linkages from CYLD deubiquitination. Participates also in the TCR signaling by ubiquitinating LAT. The polypeptide is TNF receptor-associated factor 6 (TRAF6) (Homo sapiens (Human)).